A 295-amino-acid chain; its full sequence is F-box protein SKIP24 (295 aa).

The F-box; degenerate domain maps to 19–66 (VKSSTFSYKDLCCISISSRRLFRLSCDDSLWDLLLVHDFPNHIVSASS). 2 coiled-coil regions span residues 82–129 (REKE…SSLQ) and 167–209 (EGRL…ESMK). Residues 217–245 (KSIRNGDQGSNGKTKKLKTSINYSGDQVS) are disordered. Polar residues predominate over residues 235–245 (TSINYSGDQVS).

In terms of assembly, part of a SCF (ASK-cullin-F-box) protein ligase complex. Interacts with SKP1A/ASK1 and SPK1B/ASK2.

It functions in the pathway protein modification; protein ubiquitination. Functionally, component of SCF(ASK-cullin-F-box) E3 ubiquitin ligase complexes, which may mediate the ubiquitination and subsequent proteasomal degradation of target proteins. In Arabidopsis thaliana (Mouse-ear cress), this protein is F-box protein SKIP24 (SKIP24).